Consider the following 298-residue polypeptide: Inosose dehydratase (298 aa).

Belongs to the IolE/MocC family. Glutathione serves as cofactor. It depends on Co(2+) as a cofactor. Requires Mn(2+) as cofactor.

The enzyme catalyses scyllo-inosose = 3D-3,5/4-trihydroxycyclohexane-1,2-dione + H2O. In terms of biological role, catalyzes the dehydration of inosose (2-keto-myo-inositol, 2KMI or 2,4,6/3,5-pentahydroxycyclohexanone) to 3D-(3,5/4)-trihydroxycyclohexane-1,2-dione (D-2,3-diketo-4-deoxy-epi-inositol). This chain is Inosose dehydratase, found in Erwinia tasmaniensis (strain DSM 17950 / CFBP 7177 / CIP 109463 / NCPPB 4357 / Et1/99).